The following is a 486-amino-acid chain: NADH-quinone oxidoreductase subunit N (486 aa).

Helical transmembrane passes span 8–28 (LTAL…ILSI), 36–56 (FVAV…YFLI), 74–94 (ILYI…SYPW), 104–124 (EFYL…ISHH), 125–145 (MASF…LIAY), 160–180 (IILS…VYSI), 201–221 (ILVV…KLSI), 239–259 (VLSF…LNFL), 269–289 (VIYF…NLMA), 298–318 (FLGY…LVSH), 329–349 (AIYL…VNLI), 376–396 (SVLT…GFIG), 410–432 (WLIG…RIIL), and 459–479 (IVIC…NPLI).

The protein belongs to the complex I subunit 2 family. As to quaternary structure, NDH-1 is composed of 13 different subunits. Subunits NuoA, H, J, K, L, M, N constitute the membrane sector of the complex.

The protein resides in the cell membrane. The catalysed reaction is a quinone + NADH + 5 H(+)(in) = a quinol + NAD(+) + 4 H(+)(out). Functionally, NDH-1 shuttles electrons from NADH, via FMN and iron-sulfur (Fe-S) centers, to quinones in the respiratory chain. The immediate electron acceptor for the enzyme in this species is believed to be ubiquinone. Couples the redox reaction to proton translocation (for every two electrons transferred, four hydrogen ions are translocated across the cytoplasmic membrane), and thus conserves the redox energy in a proton gradient. This Buchnera aphidicola subsp. Acyrthosiphon pisum (strain APS) (Acyrthosiphon pisum symbiotic bacterium) protein is NADH-quinone oxidoreductase subunit N.